The chain runs to 301 residues: MYHTPVLLKEMLDILSPQNGGIYVDATFGSGGYSRAILNSADCQVYAIDQDEYTYTFYEKLSNDFPNRIHFFINKFSKIQQILNNVQIKKVDGVVFDIGVSSMQLEDASRGFSFSKNGPLDMRMSTSLSGVDARMFVNTVSEVEMANVIYQYGGEKYSRKIARAIVNARNKNMINTTGELASIIRSVVSRSKNHSIDPATRTFQAIRIWVNKELEELEKGIACAANILNQGGKIIVISFHSLEDRIVKVIFKLLCDGKSVNLLNLGLGFQLINKKIIRPTAEEIHSNPRARSAKLRAILKL.

S-adenosyl-L-methionine-binding positions include 31 to 33, aspartate 49, phenylalanine 76, aspartate 97, and glutamine 104; that span reads GGY.

It belongs to the methyltransferase superfamily. RsmH family.

It localises to the cytoplasm. It carries out the reaction cytidine(1402) in 16S rRNA + S-adenosyl-L-methionine = N(4)-methylcytidine(1402) in 16S rRNA + S-adenosyl-L-homocysteine + H(+). In terms of biological role, specifically methylates the N4 position of cytidine in position 1402 (C1402) of 16S rRNA. This is Ribosomal RNA small subunit methyltransferase H from Ehrlichia ruminantium (strain Welgevonden).